We begin with the raw amino-acid sequence, 509 residues long: Cytochrome P450 monooxygenase alt3 (509 aa).

Residues 25-45 (IITGIIVLPVLYVLLKVIYNL) form a helical membrane-spanning segment. C450 is a binding site for heme.

This sequence belongs to the cytochrome P450 family. The cofactor is heme.

It localises to the membrane. It functions in the pathway secondary metabolite biosynthesis. Functionally, cytochrome P450 monooxygenase; part of the gene cluster that mediates the biosynthesis of alternapyrone derivatives. Alternapyrone is a decaketide with octa-methylation from methionine on every C2 unit except the third unit. All the domains in the polyketide synthase alt5 are apparently involved in alternapyrone synthesis, that is, the 8 CMeT, 7 KR, 7 DH, and 4 ER reactions in the 9 KS-mediated condensation steps required for alternapyrone synthesis. the alternapyrone produced by alt5 might be intensively modified by cytochrome P450 monooxygenases alt1, alt2 and alt3 and FAD-dependent oxidoreductase alt4 present in the alt gene cluster. The polypeptide is Cytochrome P450 monooxygenase alt3 (Alternaria solani).